The following is a 1811-amino-acid chain: MAVDSSMELLFLDTFKHPSAEQSSHIDVVRFPCVVYINEVRVIPPGVRAHSGLPDNRAYGETSPHTFQLDLFFNNVSKPSAPVFDRLGSLEYDENTSIIFRPNSKVNTDGLVLRGWYNCLTLAIYGSVDRVISHDRDSPPPPPPPPPPPQPQPTLKRNLKHADGEKEDQFNGSPPRPQPRGPRTPPGPPPPDDDEDDPMSLPVSGDKEEDVPHREDYFEPISPDRNSVPQEGQYSDEGEVEEEPQEEGEDDEDDVDVEEEEDEDEDDCHTVDSIPDDEEEDEEEEGEEDEEGEGDDGYEQISSDEDGIADLERETFKYPNFDVEYTPEDLASVPPMTYDPYDRELAPLLYFSCPYKTTFEIEISRMKDQGPDKENSGAVEASVKLTELLDLYQEDRGAKWVTALEEIPSLIIKGLSYLQLKNTEQDSLGQLVDWTMQALNLQVAFRQPIALNVRQLKAGTKLVTSLAECGAPGVTELLQAGVINVLFDLLFADHVSSSLKLNAFKALDSVISMTEGMEAFLRSTQNEKSGYQRLLELILLDQTVRVVTAGSAILQKCHFYEILSEIKRLGDHIAEKTSAVPNHSEPDQDTDAVLERANPDYENEVEASMDMDLLESSIISEGEIEKLTNLLEEVFHVMETAPHTMTQPPVKSFPTIARITGPPERDDPYPVLFRYLHSHHFLELVTLLLSIPITSAHQGVLQATKDVLKFLAQSQKGLLFFMSEYEATNLLIRALCHLYDQDEEEGLQSDGADDAFALWLQDSTQTLQCITELFSHFQRCTASEETDHSDLLGTLHNLYLITFNPVGRSAVGHVFSLDKNLQSLITLMEYYSKEALGDSKSKKSVAYNYACVLTLVVAQSSSGVQMLEQHAASLLKLCKADENNAKLQELGKWLEPLKNLRFEINCIPNLIEYVKQNIDNLMTAEGVGLTTALRVLCNVACPPPPVEGQQKDLKWNLAVIQLFSAEGMDTFIRVLQKLNSILTQPWRLHVNMGTTLHRVTTISMARCTLTLLKTMLTELLRGGSFEFKDMRVPSALVTLHMLLCSIPLSGRLDSDEQKIQNDIIDILLTFTQGVNEKLTISEETLANNTWSLMLKEVLSSILKVPEGFFSGLILLSELLPLPLPMQTTQVIEPHDISVALNTRKLWSMHLHVQAKLLQEIVRSFSGTTCQPIQHMLRRICVQLCDLASPTALLIMRTVLDLIVEDLQSTSEDKEKQYTSQTTRLLALLDALASHKACKLAILHLINGTIKGDERYAEIFQDLLALVRSPGDSVTRQQCVEYVTSILQSLCDQDIALILPSPSEGPASELEQLSNSLPSKELMTAICDCLLATLANSESSYNCLLTCVRTMMFLAEHDYGLFHLKSSLRKNSSALHSLLKRVVSTFSKDTGELASASLDFMRQILNADAMGCCGDDSGLMEVEGAHPPRTMSLNAAELKQLLQSKEESPESLFLELEKLVLEHSKDDDSLESLLDNVIGLKQMLESSGEPLPLSDQDVEPVLSAPESLQNLFNNRTAYVLADVMDDQLKSMWFTPFQAEEIDTDLDLVKVDLIELSEKCCSDFDLHSELERSFLSEPSSPGRSKTTKGFKLGKHKHETFITSSGKSEYIEPAKRAHVVPPPRGRGRGGFGQGIRPHDIFRQRKQNTSRPPSMHVDDFVAAESKEVVPQDGIPPPKRPLKVSQKISSRGGFSGNRGGRGAFHSQNRFFTPPASKGNYSRREGTRGSSWSAQNTPRGNYNESRGGQSNFNRGPLPPLRPLSSTGYRPSPRDRASRGRGGLGPSWASTNSGSGGSRGKFVSGGSGRGRHVRSFTR.

Ala2 carries the N-acetylalanine modification. The tract at residues 132–302 (ISHDRDSPPP…EGDDGYEQIS (171 aa)) is disordered. A phosphoserine mark is found at Ser133 and Ser138. Residues 139 to 152 (PPPPPPPPPPPQPQ) are compositionally biased toward pro residues. Basic and acidic residues predominate over residues 160 to 169 (KHADGEKEDQ). Ser173 is subject to Phosphoserine. Over residues 174 to 190 (PPRPQPRGPRTPPGPPP) the composition is skewed to pro residues. Thr184 bears the Phosphothreonine mark. A Phosphoserine modification is found at Ser222. Polar residues predominate over residues 224–233 (DRNSVPQEGQ). 2 stretches are compositionally biased toward acidic residues: residues 234 to 267 (YSDE…DEDD) and 274 to 302 (IPDD…EQIS). Position 913 is a phosphotyrosine (Tyr913). Ser1578 is subject to Phosphoserine. Disordered regions lie at residues 1615-1634 (HVVP…GIRP) and 1662-1811 (KEVV…SFTR). Residues 1688–1697 (GFSGNRGGRG) show a composition bias toward gly residues. Thr1707 carries the phosphothreonine modification. At Arg1722 the chain carries Omega-N-methylarginine. The span at 1722–1747 (RGSSWSAQNTPRGNYNESRGGQSNFN) shows a compositional bias: polar residues. Arg1740 carries the post-translational modification Asymmetric dimethylarginine; alternate. Position 1740 is an omega-N-methylarginine; alternate (Arg1740). An asymmetric dimethylarginine mark is found at Arg1772, Arg1774, and Arg1792. The span at 1787–1801 (GSGGSRGKFVSGGSG) shows a compositional bias: gly residues. Basic residues predominate over residues 1802–1811 (RGRHVRSFTR).

The protein belongs to the vir family. In terms of assembly, component of the WMM complex, a N6-methyltransferase complex composed of a catalytic subcomplex, named MAC, and of an associated subcomplex, named MACOM. The MAC subcomplex is composed of METTL3 and METTL14. The MACOM subcomplex is composed of WTAP, ZC3H13, CBLL1/HAKAI, VIRMA, and, in some cases of RBM15 (RBM15 or RBM15B). Interacts with WTAP. Also a component of a MACOM-like complex, named WTAP complex, composed of WTAP, ZC3H13, CBLL1, VIRMA, RBM15, BCLAF1 and THRAP3. Interacts with NUDT21 and CPSF6.

Its subcellular location is the nucleus speckle. It localises to the nucleus. The protein localises to the nucleoplasm. It is found in the cytoplasm. Associated component of the WMM complex, a complex that mediates N6-methyladenosine (m6A) methylation of RNAs, a modification that plays a role in the efficiency of mRNA splicing and RNA processing. Acts as a key regulator of m6A methylation by promoting m6A methylation of mRNAs in the 3'-UTR near the stop codon: recruits the catalytic core components METTL3 and METTL14, thereby guiding m6A methylation at specific sites. Required for mRNA polyadenylation via its role in selective m6A methylation: m6A methylation of mRNAs in the 3'-UTR near the stop codon correlating with alternative polyadenylation (APA). This is Protein virilizer homolog from Mus musculus (Mouse).